We begin with the raw amino-acid sequence, 87 residues long: Elastase inhibitor AFLEI (87 aa).

The N-terminal stretch at 1–19 is a signal peptide; that stretch reads MKFSLACLLALAGLQAALA. A disulfide bridge connects residues Cys24 and Cys86.

The protein resides in the secreted. Functionally, elastase inhibitor. This Aspergillus fumigatus (strain CBS 144.89 / FGSC A1163 / CEA10) (Neosartorya fumigata) protein is Elastase inhibitor AFLEI.